An 83-amino-acid polypeptide reads, in one-letter code: uncharacterized protein (83 aa).

This is an uncharacterized protein from Vaccinia virus (strain Copenhagen) (VACV).